A 3078-amino-acid chain; its full sequence is Probable polyketide synthase 34 (3078 aa).

Residues 28 to 462 (SGDVAVIGIG…GSNVCLILSE (435 aa)) form the Ketosynthase family 3 (KS3) domain. Residues Cys-200, His-339, and His-385 each act as for beta-ketoacyl synthase activity in the active site. The interval 665-698 (GVSADIIIGHSLGEISSSYCSGIIDFQTLCYLTY) is acyl/malonyl transferase. The active-site For acyl/malonyl transferase activity is the Ser-675. Residues 954-1083 (HEKIKNEGPS…GNFSLTKHNI (130 aa)) form an N-terminal hotdog fold region. In terms of domain architecture, PKS/mFAS DH spans 954-1264 (HEKIKNEGPS…CTIVGSNPDS (311 aa)). His-995 functions as the Proton acceptor; for dehydratase activity in the catalytic mechanism. Positions 1099–1264 (NFTSISKQDL…CTIVGSNPDS (166 aa)) are C-terminal hotdog fold. Residue Asp-1171 is the Proton donor; for dehydratase activity of the active site. Positions 1375-1396 (NINNNNNNNNNNNNNNNNNSNG) are disordered. Residues 2541–2618 (DNNEIIRSTI…QSIEIIKSAH (78 aa)) form the Carrier domain. Ser-2578 is subject to O-(pantetheine 4'-phosphoryl)serine. Disordered regions lie at residues 2617-2640 (AHNNNNNNNNNNNNNNNNNNNNNN) and 2739-2761 (NKGSPNQRLNSNIESGDNSDNNS). The span at 2619–2640 (NNNNNNNNNNNNNNNNNNNNNN) shows a compositional bias: low complexity. The stretch at 2621–2652 (NNNNNNNNNNNNNNNNNNNNLVKKEQQSLDEF) forms a coiled coil.

Requires pantetheine 4'-phosphate as cofactor.

Its function is as follows. Probable polyketide synthase. The protein is Probable polyketide synthase 34 (pks34) of Dictyostelium discoideum (Social amoeba).